Reading from the N-terminus, the 183-residue chain is Alkyl hydroperoxide reductase AhpD (183 aa).

Residue cysteine 132 is the Proton donor of the active site. Cysteine 132 and cysteine 135 are joined by a disulfide. The active-site Cysteine sulfenic acid (-SOH) intermediate is cysteine 135.

It belongs to the AhpD family.

It carries out the reaction N(6)-[(R)-dihydrolipoyl]-L-lysyl-[lipoyl-carrier protein] + a hydroperoxide = N(6)-[(R)-lipoyl]-L-lysyl-[lipoyl-carrier protein] + an alcohol + H2O. Its function is as follows. Antioxidant protein with alkyl hydroperoxidase activity. Required for the reduction of the AhpC active site cysteine residues and for the regeneration of the AhpC enzyme activity. The sequence is that of Alkyl hydroperoxide reductase AhpD from Acidobacterium capsulatum (strain ATCC 51196 / DSM 11244 / BCRC 80197 / JCM 7670 / NBRC 15755 / NCIMB 13165 / 161).